Here is a 328-residue protein sequence, read N- to C-terminus: Purple acid phosphatase 7 (328 aa).

The signal sequence occupies residues 1 to 24 (MKMHVCFSVILMFLSIFFINGALS). Residue D48 coordinates Fe cation. N-linked (GlcNAc...) asparagine glycosylation occurs at N56. The Fe cation site is built by D81 and Y84. D81 contacts Zn(2+). Zn(2+) is bound by residues N119 and H213. The active-site Proton donor is H222. Zn(2+) is bound at residue H248. Residue 248–250 (HDH) coordinates substrate. H250 is a Fe cation binding site.

The protein belongs to the metallophosphoesterase superfamily. Purple acid phosphatase family. Homodimer. Fe cation is required as a cofactor. The cofactor is Zn(2+). Expressed in roots, stems, leaves, flowers and siliques.

The protein localises to the secreted. The enzyme catalyses a phosphate monoester + H2O = an alcohol + phosphate. The chain is Purple acid phosphatase 7 (PAP7) from Arabidopsis thaliana (Mouse-ear cress).